A 65-amino-acid polypeptide reads, in one-letter code: UPF0434 protein HSM_0997 (65 aa).

This sequence belongs to the UPF0434 family.

The polypeptide is UPF0434 protein HSM_0997 (Histophilus somni (strain 2336) (Haemophilus somnus)).